A 315-amino-acid polypeptide reads, in one-letter code: Transcription antitermination protein NusB (315 aa).

The tract at residues 296–315 (SANFDTKSAELNDADEKSQD) is disordered. Over residues 302-315 (KSAELNDADEKSQD) the composition is skewed to basic and acidic residues.

This sequence belongs to the NusB family.

Its function is as follows. Involved in transcription antitermination. Required for transcription of ribosomal RNA (rRNA) genes. Binds specifically to the boxA antiterminator sequence of the ribosomal RNA (rrn) operons. This chain is Transcription antitermination protein NusB, found in Psychrobacter cryohalolentis (strain ATCC BAA-1226 / DSM 17306 / VKM B-2378 / K5).